Reading from the N-terminus, the 700-residue chain is Long-chain-fatty-acid--CoA ligase 1 (700 aa).

The interval 1–21 is disordered; that stretch reads MVAQYTVPVGKAANEHETAPR. Lysine 189 is covalently cross-linked (Glycyl lysine isopeptide (Lys-Gly) (interchain with G-Cter in ubiquitin)). Residue 269-280 coordinates ATP; the sequence is YTSGSTGEPKGV. The FACS signature appears at 531–580; the sequence is DGWFKTGDIGEWEANGHLKIIDRKKNLVKTMNGEYIALEKLESVYRSNEY.

The protein belongs to the ATP-dependent AMP-binding enzyme family. Interacts with FAT1. Requires Mg(2+) as cofactor.

It is found in the lipid droplet. It localises to the cell membrane. The enzyme catalyses a long-chain fatty acid + ATP + CoA = a long-chain fatty acyl-CoA + AMP + diphosphate. It carries out the reaction (9Z)-octadecenoate + ATP + CoA = (9Z)-octadecenoyl-CoA + AMP + diphosphate. The catalysed reaction is hexadecanoate + ATP + CoA = hexadecanoyl-CoA + AMP + diphosphate. It catalyses the reaction (9Z)-hexadecenoate + ATP + CoA = (9Z)-hexadecenoyl-CoA + AMP + diphosphate. The enzyme catalyses tetradecanoate + ATP + CoA = tetradecanoyl-CoA + AMP + diphosphate. It carries out the reaction (9Z)-tetradecenoate + ATP + CoA = (9Z)-tetradecenoyl-CoA + AMP + diphosphate. The catalysed reaction is (9Z,12Z)-octadecadienoate + ATP + CoA = (9Z,12Z)-octadecadienoyl-CoA + AMP + diphosphate. It catalyses the reaction dodecanoate + ATP + CoA = dodecanoyl-CoA + AMP + diphosphate. The enzyme catalyses pentadecanoate + ATP + CoA = pentadecanoyl-CoA + AMP + diphosphate. It carries out the reaction undecanoate + ATP + CoA = undecanoyl-CoA + AMP + diphosphate. The catalysed reaction is heptadecanoate + ATP + CoA = heptadecanoyl-CoA + AMP + diphosphate. It catalyses the reaction octadecanoate + ATP + CoA = octadecanoyl-CoA + AMP + diphosphate. Functionally, activates long-chain fatty acids (LCFA) by esterification of the fatty acids into metabolically active CoA-thioesters for subsequent degradation or incorporation into phospholipids. Also facilitates the transport of LCFAs into the cell, either by active transport or by decreasing the intracellular LCFA concentration. It may supplement intracellular myristoyl-CoA pools from exogenous myristate. Preferentially acts on C12:0-C16:0 fatty acids with myristic and pentadecanic acid (C15:0) having the highest activities. Also involved in long-chain base (LCB) uptake of sphingolipids. In contrast ot LCFA uptake, LCB uptake does not require ATP, suggesting that the enzyme is directly involved in active LCB uptake. Involved in the sphingolipid-to-glycerolipid metabolic pathway, converting the sphingolipid metabolite hexadecenoic acid to hexadecenoyl-CoA, which is then further converted to glycerolipids. This chain is Long-chain-fatty-acid--CoA ligase 1 (FAA1), found in Saccharomyces cerevisiae (strain ATCC 204508 / S288c) (Baker's yeast).